We begin with the raw amino-acid sequence, 334 residues long: Serine/Arginine-related protein 53 (334 aa).

Over residues 1 to 13 (MGRRSSDTEEESR) the composition is skewed to basic and acidic residues. Disordered stretches follow at residues 1–179 (MGRR…HLPP), 198–220 (DEALKAKERSEEEAKRRKEEDQA), and 246–290 (RSSK…SIPT). The segment covering 14–24 (SKRKKKHRRRS) has biased composition (basic residues). Over residues 44 to 62 (PRSDSRSWSRDRQLRSHSY) the composition is skewed to basic and acidic residues. The span at 78–118 (SRRKRSRSRSRGRGKPYRVQRSRSKSRTRRSRSRPRPRSHS) shows a compositional bias: basic residues. 3 stretches are compositionally biased toward basic and acidic residues: residues 132 to 166 (RSRDRDRRKVRDKEKREKEKDKGKDKEVHSIKRGD), 198 to 218 (DEALKAKERSEEEAKRRKEED), and 247 to 256 (SSKDVKKAVE). Residues 180–236 (AEQAKARLQLVLEAAAKADEALKAKERSEEEAKRRKEEDQATLVEQVKRVKEIEAIE) adopt a coiled-coil conformation. Residues 265 to 278 (AASGPASAAAEPPS) are compositionally biased toward low complexity.

As to quaternary structure, interacts (via Arg/Ser-rich domain) with LUC7L3, RBM39 and RSF1. Phosphorylated.

Its subcellular location is the nucleus. The protein localises to the nucleus speckle. It localises to the cytoplasm. Its function is as follows. Plays a role in pre-mRNA splicing. Involved in both constitutive and alternative pre-mRNA splicing. May have a role in the recognition of the 3' splice site during the second step of splicing. This Mus musculus (Mouse) protein is Serine/Arginine-related protein 53 (Rsrc1).